The chain runs to 610 residues: Solute carrier family 2, facilitated glucose transporter member 12 (610 aa).

Topologically, residues 1–49 (MDAPEESIRMTSDPQSKIYVQNPDTHIHLEQGPSAKSGNGRALVLCSVS) are cytoplasmic. The chain crosses the membrane as a helical span at residues 50 to 70 (VACLSGLLMGYEMSLISGALL). Residues 71–84 (QLRDVLTLSCPEQE) are Extracellular-facing. The helical transmembrane segment at 85 to 105 (QVVGSLLLGAFLLSLGGGTIL) threads the bilayer. Topologically, residues 106–118 (DHYGRRFTIILTA) are cytoplasmic. The chain crosses the membrane as a helical span at residues 119–139 (LLCVLGTLLSVCVVSFWALVV). The Extracellular segment spans residues 140–141 (GR). A helical membrane pass occupies residues 142 to 162 (MLVGMSVALSGTASCLYAAEV). At 163–176 (APAAWRGRCVCVYE) the chain is on the cytoplasmic side. Residues 177 to 197 (LMVVLGMLLGFGLSWAFAGVP) traverse the membrane as a helical segment. The Extracellular segment spans residues 198–201 (DGWR). Residues 202 to 222 (FTFGGALLPALLQAGVMPLLP) form a helical membrane-spanning segment. Topologically, residues 223 to 286 (DSPRFLLAQQ…FQSRDNMLQR (64 aa)) are cytoplasmic. Residues 287-307 (LLVGAALVFLQQATGQPNILA) traverse the membrane as a helical segment. The Extracellular portion of the chain corresponds to 308-325 (YASTVLSSVGFHGNEAAT). A helical transmembrane segment spans residues 326-346 (LASTGFGVVKVGGTIPAIFLV). The Cytoplasmic portion of the chain corresponds to 347–353 (DKVGPKA). Residues 354-374 (LLCVGVVVMMLSTATLGAITM) traverse the membrane as a helical segment. Residues 375-475 (QSRTHVSSLC…LHEVSPSLKW (101 aa)) are Extracellular-facing. Asparagine 392, asparagine 429, and asparagine 438 each carry an N-linked (GlcNAc...) asparagine glycan. The chain crosses the membrane as a helical span at residues 476–496 (ISLVSLLVYVAGFSISLGPMV). The Cytoplasmic portion of the chain corresponds to 497–511 (HVVLSAIFPTGIRGK). A helical transmembrane segment spans residues 512-532 (AVSVISAFNWATNLLISMTFL). Residues 533–542 (TLTERIGLPT) lie on the Extracellular side of the membrane. A helical membrane pass occupies residues 543-563 (VIFSYSAMSFLLVVFVIVFVP). Topologically, residues 564-610 (ETKGRSLEQISKELAMKNHLRGTLLCHRRKHKATAQPSQEEKALATV) are cytoplasmic.

Belongs to the major facilitator superfamily. Sugar transporter (TC 2.A.1.1) family. Glucose transporter subfamily. As to expression, expressed in the main insulin-sensitive tissues, such as cardiac muscle, skeletal muscle and adipose tissue.

The protein resides in the cell membrane. The protein localises to the endomembrane system. Its subcellular location is the cytoplasm. It is found in the perinuclear region. The enzyme catalyses D-glucose(out) = D-glucose(in). In terms of biological role, insulin-regulated facilitative glucose transporter. In Danio rerio (Zebrafish), this protein is Solute carrier family 2, facilitated glucose transporter member 12.